A 426-amino-acid polypeptide reads, in one-letter code: S-adenosylmethionine synthase (426 aa).

An ATP-binding site is contributed by His-22. Residue Asp-24 coordinates Mg(2+). K(+) is bound at residue Glu-50. Positions 63 and 106 each coordinate L-methionine. A flexible loop region spans residues 106–116 (QSPDISQGVTA). ATP contacts are provided by residues 181–183 (DGK), 257–258 (KF), Asp-266, 272–273 (RK), Ala-289, and Lys-293. Asp-266 provides a ligand contact to L-methionine. Lys-297 is an L-methionine binding site.

Belongs to the AdoMet synthase family. As to quaternary structure, homotetramer; dimer of dimers. Mg(2+) serves as cofactor. K(+) is required as a cofactor.

It localises to the cytoplasm. The catalysed reaction is L-methionine + ATP + H2O = S-adenosyl-L-methionine + phosphate + diphosphate. It functions in the pathway amino-acid biosynthesis; S-adenosyl-L-methionine biosynthesis; S-adenosyl-L-methionine from L-methionine: step 1/1. In terms of biological role, catalyzes the formation of S-adenosylmethionine (AdoMet) from methionine and ATP. The overall synthetic reaction is composed of two sequential steps, AdoMet formation and the subsequent tripolyphosphate hydrolysis which occurs prior to release of AdoMet from the enzyme. The sequence is that of S-adenosylmethionine synthase from Synechocystis sp. (strain ATCC 27184 / PCC 6803 / Kazusa).